Reading from the N-terminus, the 265-residue chain is Silaffin-1 (265 aa).

Residues 1-19 form the signal peptide; that stretch reads MKLTAIFPLLFTAVGYCAA. The propeptide at 20 to 107 is acidic; it reads QSIADLAAAN…DSEEEELRIL (88 aa). The tract at residues 37–106 is disordered; sequence SAQLISADSS…EDSEEEELRI (70 aa). Over residues 51–90 the composition is skewed to low complexity; sequence DSSVESVDAASSDVSGSSVESVDVSGSSLESVDVSGSSLE. The segment covering 91–103 has biased composition (acidic residues); sequence SVDDSSEDSEEEE. The stretch at 108 to 140 is one R1; atypical repeat; the sequence is SSKKSGSYYSYGTKKSGSYSGYSTKKSASRRIL. The 7 X 19 AA repeat of S-S-K-K-S-G-S-Y-S-G-S-K-G-S-K-R-R-[IL]-L stretch occupies residues 108–257; the sequence is SSKKSGSYYS…GSKGSKRRIL (150 aa). N6-poly(methylaminopropyl)lysine is present on Lys110. Residue Lys111 is modified to N6,N6-dimethyllysine. Low complexity predominate over residues 122-133; the sequence is KSGSYSGYSTKK. Residues 122–265 are disordered; sequence KSGSYSGYST…ILSGGLRGSM (144 aa). A propeptide spanning residues 137–140 is cleaved from the precursor; that stretch reads RRIL. The R2; atypical repeat unit spans residues 141-162; that stretch reads SSKKSGSYSGYSTKKSGSRRIL. The span at 142-155 shows a compositional bias: low complexity; the sequence is SKKSGSYSGYSTKK. At Lys143 the chain carries N6-poly(methylaminopropyl)lysine. The residue at position 144 (Lys144) is an N6,N6-dimethyllysine. Position 154 is an N6-poly(methylaminopropyl)lysine (Lys154). Position 155 is an N6,N6-dimethyllysine (Lys155). A propeptide spanning residues 159–162 is cleaved from the precursor; that stretch reads RRIL. Ser163 and Ser164 each carry phosphoserine. The stretch at 163 to 181 is one R3 repeat; sequence SSKKSGSYSGSKGSKRRIL. Positions 164–174 are enriched in low complexity; that stretch reads SKKSGSYSGSK. The residue at position 165 (Lys165) is an N6-poly(methylaminopropyl)lysine. Position 166 is an N6,N6-dimethyllysine (Lys166). A phosphoserine mark is found at Ser167, Ser169, Ser171, and Ser173. Residue Lys174 is modified to N6,N6,N6-trimethyl-5-hydroxylysine. Ser176 is subject to Phosphoserine. Residue Lys177 is modified to N6-poly(methylaminopropyl)lysine. Positions 178-181 are excised as a propeptide; it reads RRIL. Phosphoserine occurs at positions 182 and 183. The stretch at 182 to 200 is one R4 repeat; that stretch reads SSKKSGSYSGSKGSKRRNL. The segment covering 183–193 has biased composition (low complexity); sequence SKKSGSYSGSK. Lys184 bears the N6-poly(methylaminopropyl)lysine mark. An N6,N6-dimethyllysine modification is found at Lys185. Ser186, Ser188, Ser190, and Ser192 each carry phosphoserine. Lys193 carries the N6,N6,N6-trimethyl-5-hydroxylysine modification. A Phosphoserine modification is found at Ser195. At Lys196 the chain carries N6-poly(methylaminopropyl)lysine. The propeptide occupies 197–200; that stretch reads RRNL. A phosphoserine mark is found at Ser201 and Ser202. An R5 repeat occupies 201-219; that stretch reads SSKKSGSYSGSKGSKRRIL. A compositionally biased stretch (low complexity) spans 202–212; that stretch reads SKKSGSYSGSK. Position 203 is an N6-poly(methylaminopropyl)lysine (Lys203). Lys204 carries the post-translational modification N6,N6-dimethyllysine. Ser205, Ser207, Ser209, and Ser211 each carry phosphoserine. Lys212 bears the N6,N6,N6-trimethyl-5-hydroxylysine mark. A Phosphoserine modification is found at Ser214. Lys215 bears the N6-poly(methylaminopropyl)lysine mark. Residues 216-219 constitute a propeptide that is removed on maturation; the sequence is RRIL. Residues Ser220 and Ser221 each carry the phosphoserine modification. The R6 repeat unit spans residues 220–238; it reads SSKKSGSYSGSKGSKRRNL. Positions 221–231 are enriched in low complexity; that stretch reads SKKSGSYSGSK. Lys222 is subject to N6-poly(methylaminopropyl)lysine. At Lys223 the chain carries N6,N6-dimethyllysine. Phosphoserine is present on residues Ser224, Ser226, Ser228, and Ser230. Lys231 is subject to N6,N6,N6-trimethyl-5-hydroxylysine. Ser233 is subject to Phosphoserine. Residue Lys234 is modified to N6-poly(methylaminopropyl)lysine. Positions 235–238 are excised as a propeptide; sequence RRNL. Phosphoserine is present on residues Ser239 and Ser240. Residues 239–257 form an R7 repeat; the sequence is SSKKSGSYSGSKGSKRRIL. The segment covering 240–250 has biased composition (low complexity); it reads SKKSGSYSGSK. At Lys241 the chain carries N6-poly(methylaminopropyl)lysine. Lys242 carries the post-translational modification N6,N6-dimethyllysine. Ser243, Ser245, Ser247, and Ser249 each carry phosphoserine. An N6,N6,N6-trimethyl-5-hydroxylysine modification is found at Lys250. Position 252 is a phosphoserine (Ser252). Lys253 carries the N6-poly(methylaminopropyl)lysine modification. Residues 254–265 constitute a propeptide that is removed on maturation; it reads RRILSGGLRGSM.

As to quaternary structure, silaffin-1A peptides form large aggregates via electrostatic interactions due to intermolecular interactions between the negatively charged phosphate groups and the polyamine moieties. N6-polymethylaminopropylated. Two lysine residues of each peptide bears 6 to 11 repeats of methyl-propylamine, which gives a possible template for nucleation, and may also control the silica colloid size within the silica deposition vesicle (SDV). In terms of processing, phosphorylated. All serine residues of the Silaffin-1A1 peptide are phosphorylated. Only minor amounts of the Silaffin-1A2 peptide are phosphorylated. Phosphorylation is essential for the activity. It may represent a source of anions required for silica formation of diatoms.

In terms of biological role, catalyzes the polymerization of silica spheres from a silicilic acid solution. It therefore plays a central role in the formation of silica cell wall of diatoms. This is Silaffin-1 (SIL1) from Cylindrotheca fusiformis (Marine diatom).